The chain runs to 241 residues: ATP phosphoribosyltransferase (241 aa).

The protein belongs to the ATP phosphoribosyltransferase family. Short subfamily. Heteromultimer composed of HisG and HisZ subunits.

The protein localises to the cytoplasm. The catalysed reaction is 1-(5-phospho-beta-D-ribosyl)-ATP + diphosphate = 5-phospho-alpha-D-ribose 1-diphosphate + ATP. It participates in amino-acid biosynthesis; L-histidine biosynthesis; L-histidine from 5-phospho-alpha-D-ribose 1-diphosphate: step 1/9. Its function is as follows. Catalyzes the condensation of ATP and 5-phosphoribose 1-diphosphate to form N'-(5'-phosphoribosyl)-ATP (PR-ATP). Has a crucial role in the pathway because the rate of histidine biosynthesis seems to be controlled primarily by regulation of HisG enzymatic activity. This is ATP phosphoribosyltransferase from Gluconobacter oxydans (strain 621H) (Gluconobacter suboxydans).